The chain runs to 112 residues: Thioredoxin-like protein YdfQ (112 aa).

In terms of domain architecture, Thioredoxin spans 1 to 107 (MKEMTGLHSL…LEQKLKRVYR (107 aa)). Residues C32 and C35 are joined by a disulfide bond.

This chain is Thioredoxin-like protein YdfQ (ydfQ), found in Bacillus subtilis (strain 168).